The sequence spans 481 residues: Phloretin 4'-O-glucosyltransferase (481 aa).

Catalysis depends on His16, which acts as the Proton acceptor. An anthocyanidin is bound at residue His16. 8 residues coordinate UDP-alpha-D-glucose: Gln354, His369, Trp372, Asn373, Ser374, Glu377, Asp393, and Gln394.

Belongs to the UDP-glycosyltransferase family. As to expression, highly expressed in young leaves, at intermediate level in mature leaves and at low levels in flowers and fruits.

The catalysed reaction is phloretin + UDP-alpha-D-glucose = trilobatin + UDP + H(+). It catalyses the reaction (2S)-naringenin + UDP-alpha-D-glucose = (2S)-naringenin 7-O-beta-D-glucoside + UDP + H(+). Glycosyltransferase that possesses phloretin 4'-O-glycosyltransferase activity. Converts phloretin to trilobatin (phloretin 4'-O-glucoside), a potential antioxidant. Can convert with low efficiency phlorizin and trilobatin to their corresponding di-O-glucosides. Can convert with low efficiency naringenin to naringenin-7-O-glucoside. Can convert with low efficiency quercetin to quercetin-7-O-glucoside. The protein is Phloretin 4'-O-glucosyltransferase of Malus domestica (Apple).